The sequence spans 223 residues: NAD(P)H-hydrate epimerase (223 aa).

The YjeF N-terminal domain maps to 9 to 209 (MQKIDTYTVN…DIGLLTPPDF (201 aa)). 57–61 (NNGAD) is a (6S)-NADPHX binding site. K(+) contacts are provided by Asn-58 and Asp-119. Residues 123 to 129 (GTGLNNL) and Asp-152 contribute to the (6S)-NADPHX site. Thr-155 contacts K(+).

The protein belongs to the NnrE/AIBP family. K(+) is required as a cofactor.

The catalysed reaction is (6R)-NADHX = (6S)-NADHX. It catalyses the reaction (6R)-NADPHX = (6S)-NADPHX. In terms of biological role, catalyzes the epimerization of the S- and R-forms of NAD(P)HX, a damaged form of NAD(P)H that is a result of enzymatic or heat-dependent hydration. This is a prerequisite for the S-specific NAD(P)H-hydrate dehydratase to allow the repair of both epimers of NAD(P)HX. The chain is NAD(P)H-hydrate epimerase from Leuconostoc gelidum subsp. gasicomitatum (strain DSM 15947 / CCUG 46042 / CECT 5767 / JCM 12535 / LMG 18811 / NBRC 113245 / TB1-10) (Leuconostoc gasicomitatum).